Consider the following 57-residue polypeptide: Large ribosomal subunit protein bL32B (57 aa).

This sequence belongs to the bacterial ribosomal protein bL32 family.

In Listeria welshimeri serovar 6b (strain ATCC 35897 / DSM 20650 / CCUG 15529 / CIP 8149 / NCTC 11857 / SLCC 5334 / V8), this protein is Large ribosomal subunit protein bL32B.